Consider the following 154-residue polypeptide: Putative pre-16S rRNA nuclease (154 aa).

Belongs to the YqgF nuclease family.

It is found in the cytoplasm. Functionally, could be a nuclease involved in processing of the 5'-end of pre-16S rRNA. This Rickettsia akari (strain Hartford) protein is Putative pre-16S rRNA nuclease.